The following is a 334-amino-acid chain: Holliday junction branch migration complex subunit RuvB (334 aa).

The large ATPase domain (RuvB-L) stretch occupies residues 4 to 186; the sequence is ADRLIAPENP…FGITQRLEYY (183 aa). ATP contacts are provided by residues isoleucine 25, arginine 26, glycine 67, lysine 70, threonine 71, threonine 72, 133–135, arginine 176, tyrosine 186, and arginine 223; that span reads EDY. A Mg(2+)-binding site is contributed by threonine 71. The segment at 187–257 is small ATPAse domain (RuvB-S); that stretch reads KVQDLQNIVQ…VADKALNMLD (71 aa). The head domain (RuvB-H) stretch occupies residues 260–334; that stretch reads AQGFDYMDRK…RAYLHFGIEK (75 aa). The DNA site is built by arginine 315 and arginine 320.

This sequence belongs to the RuvB family. Homohexamer. Forms an RuvA(8)-RuvB(12)-Holliday junction (HJ) complex. HJ DNA is sandwiched between 2 RuvA tetramers; dsDNA enters through RuvA and exits via RuvB. An RuvB hexamer assembles on each DNA strand where it exits the tetramer. Each RuvB hexamer is contacted by two RuvA subunits (via domain III) on 2 adjacent RuvB subunits; this complex drives branch migration. In the full resolvosome a probable DNA-RuvA(4)-RuvB(12)-RuvC(2) complex forms which resolves the HJ.

It localises to the cytoplasm. It carries out the reaction ATP + H2O = ADP + phosphate + H(+). The RuvA-RuvB-RuvC complex processes Holliday junction (HJ) DNA during genetic recombination and DNA repair, while the RuvA-RuvB complex plays an important role in the rescue of blocked DNA replication forks via replication fork reversal (RFR). RuvA specifically binds to HJ cruciform DNA, conferring on it an open structure. The RuvB hexamer acts as an ATP-dependent pump, pulling dsDNA into and through the RuvAB complex. RuvB forms 2 homohexamers on either side of HJ DNA bound by 1 or 2 RuvA tetramers; 4 subunits per hexamer contact DNA at a time. Coordinated motions by a converter formed by DNA-disengaged RuvB subunits stimulates ATP hydrolysis and nucleotide exchange. Immobilization of the converter enables RuvB to convert the ATP-contained energy into a lever motion, pulling 2 nucleotides of DNA out of the RuvA tetramer per ATP hydrolyzed, thus driving DNA branch migration. The RuvB motors rotate together with the DNA substrate, which together with the progressing nucleotide cycle form the mechanistic basis for DNA recombination by continuous HJ branch migration. Branch migration allows RuvC to scan DNA until it finds its consensus sequence, where it cleaves and resolves cruciform DNA. This Vibrio parahaemolyticus serotype O3:K6 (strain RIMD 2210633) protein is Holliday junction branch migration complex subunit RuvB.